Reading from the N-terminus, the 369-residue chain is H-2 class I histocompatibility antigen, K-K alpha chain (369 aa).

A signal peptide spans 1–21 (MAPCMLLLLLAAALAPTQTRA). The interval 22–111 (GPHSLRYFHT…ALRYYNQSAG (90 aa)) is alpha-1. The Extracellular portion of the chain corresponds to 22-305 (GPHSLRYFHT…EPPPSTVSNT (284 aa)). Asparagine 107 is a glycosylation site (N-linked (GlcNAc...) asparagine). The tract at residues 112–203 (GSHTFQRMYG…QLGNATLPRT (92 aa)) is alpha-2. Cysteine 122 and cysteine 185 form a disulfide bridge. N-linked (GlcNAc...) asparagine glycosylation is present at asparagine 197. Positions 204 to 295 (DSPKAHVTRH…GLPEPLTLRW (92 aa)) are alpha-3. Residues 206–294 (PKAHVTRHSR…QGLPEPLTLR (89 aa)) enclose the Ig-like C1-type domain. Cysteine 224 and cysteine 280 are disulfide-bonded. A connecting peptide region spans residues 296–305 (EPPPSTVSNT). The chain crosses the membrane as a helical span at residues 306 to 328 (VIIAVLVVLGAAIVTGAVVAFVM). At 329–369 (KMRRRNTGGKGGDYALAPGSQTSDLSLPDCKVMVHDPHSLA) the chain is on the cytoplasmic side. Phosphoserine is present on residues serine 351 and serine 354.

It belongs to the MHC class I family. In terms of assembly, heterodimer of an alpha chain and a beta chain (beta-2-microglobulin).

The protein resides in the membrane. Involved in the presentation of foreign antigens to the immune system. This is H-2 class I histocompatibility antigen, K-K alpha chain (H2-K1) from Mus musculus (Mouse).